Consider the following 364-residue polypeptide: 3-isopropylmalate dehydrogenase (364 aa).

Position 79–92 (Gly79–Glu92) interacts with NAD(+). Positions 100, 110, 139, and 228 each coordinate substrate. Positions 228, 252, and 256 each coordinate Mg(2+). Residue Gly286 to Asn298 participates in NAD(+) binding.

Belongs to the isocitrate and isopropylmalate dehydrogenases family. LeuB type 1 subfamily. In terms of assembly, homodimer. The cofactor is Mg(2+). Requires Mn(2+) as cofactor.

The protein resides in the cytoplasm. It carries out the reaction (2R,3S)-3-isopropylmalate + NAD(+) = 4-methyl-2-oxopentanoate + CO2 + NADH. The protein operates within amino-acid biosynthesis; L-leucine biosynthesis; L-leucine from 3-methyl-2-oxobutanoate: step 3/4. In terms of biological role, catalyzes the oxidation of 3-carboxy-2-hydroxy-4-methylpentanoate (3-isopropylmalate) to 3-carboxy-4-methyl-2-oxopentanoate. The product decarboxylates to 4-methyl-2 oxopentanoate. The chain is 3-isopropylmalate dehydrogenase from Blochmanniella floridana.